Reading from the N-terminus, the 257-residue chain is Golgi SNAP receptor complex member 1-2 (257 aa).

The Cytoplasmic segment spans residues 1 to 235; it reads MTESSLDLQE…GSIKRKRSRD (235 aa). At Asn-51 the chain carries Phosphoserine. Residues 113 to 147 are a coiled coil; that stretch reads TQKLARHRDILHEYTQEFRRIKGNINSLREHAELL. Residues 236–256 form a helical; Anchor for type IV membrane protein membrane-spanning segment; it reads TLILSAVIAACTLFLIIYWLS. Residue Lys-257 is a topological domain, vesicular.

This sequence belongs to the GOSR1 family. In terms of assembly, component of several multiprotein Golgi SNARE complexes.

It is found in the golgi apparatus membrane. The protein resides in the endoplasmic reticulum membrane. Involved in transport from the ER to the Golgi apparatus as well as in intra-Golgi transport. It belongs to a super-family of proteins called t-SNAREs or soluble NSF (N-ethylmaleimide-sensitive factor) attachment protein receptor. The polypeptide is Golgi SNAP receptor complex member 1-2 (GOS12) (Arabidopsis thaliana (Mouse-ear cress)).